The chain runs to 629 residues: Filament-like plant protein 2 (629 aa).

Coiled coils occupy residues 34–61 and 102–171; these read WEKA…LEDR and NTGL…LEAE. Residues 186–205 are disordered; sequence SSNQSVDSHSDGGRERVEGS. Residues 193–203 show a composition bias toward basic and acidic residues; it reads SHSDGGRERVE. The stretch at 270 to 493 forms a coiled coil; sequence ELSLMEKLEK…IEEKTMIKRE (224 aa).

The protein belongs to the FPP family. As to quaternary structure, interacts with WPP/MAF proteins. Binds to COG2; this interaction promotes the association between cortical microtubules and EXO70A1. As to expression, accumulates in preferentially xylem cells.

It is found in the vesicle. In terms of biological role, ensures, when in complex with FPP3/VETH1 and COG2, the correct secondary cell wall (SCW) deposition pattern by recruiting exocyst components to cortical microtubules in xylem cells during secondary cell wall deposition by recruiting EXO70A1. This chain is Filament-like plant protein 2, found in Arabidopsis thaliana (Mouse-ear cress).